The following is a 429-amino-acid chain: Citrate synthase, plasmid (429 aa).

Catalysis depends on residues histidine 306 and aspartate 364.

This sequence belongs to the citrate synthase family.

It carries out the reaction oxaloacetate + acetyl-CoA + H2O = citrate + CoA + H(+). The protein operates within carbohydrate metabolism; tricarboxylic acid cycle; isocitrate from oxaloacetate: step 1/2. The exact function of the plasmid-encoded citrate synthase is not clear, it could help nodulation by allowing the bacteria to use citrate as a chelator of iron and calcium. The sequence is that of Citrate synthase, plasmid (pcsA) from Rhizobium tropici.